Consider the following 336-residue polypeptide: Phospho-N-acetylmuramoyl-pentapeptide-transferase (336 aa).

The next 10 membrane-spanning stretches (helical) occupy residues 3-23 (LTLI…PYFI), 53-73 (GGTV…LFSI), 78-98 (SLAL…IGFL), 118-138 (LALQ…PSGI), 143-163 (VFGY…FWVV), 174-194 (GIDG…GVIA), 200-220 (FDVL…FCFN), 226-246 (VFMG…ISIA), 254-274 (LIIG…VFYF), and 316-336 (AFLW…LYVF).

This sequence belongs to the glycosyltransferase 4 family. MraY subfamily. It depends on Mg(2+) as a cofactor.

It is found in the cell membrane. It catalyses the reaction UDP-N-acetyl-alpha-D-muramoyl-L-alanyl-gamma-D-glutamyl-L-lysyl-D-alanyl-D-alanine + di-trans,octa-cis-undecaprenyl phosphate = Mur2Ac(oyl-L-Ala-gamma-D-Glu-L-Lys-D-Ala-D-Ala)-di-trans,octa-cis-undecaprenyl diphosphate + UMP. The protein operates within cell wall biogenesis; peptidoglycan biosynthesis. Catalyzes the initial step of the lipid cycle reactions in the biosynthesis of the cell wall peptidoglycan: transfers peptidoglycan precursor phospho-MurNAc-pentapeptide from UDP-MurNAc-pentapeptide onto the lipid carrier undecaprenyl phosphate, yielding undecaprenyl-pyrophosphoryl-MurNAc-pentapeptide, known as lipid I. The sequence is that of Phospho-N-acetylmuramoyl-pentapeptide-transferase from Streptococcus pyogenes serotype M18 (strain MGAS8232).